The following is a 145-amino-acid chain: Large ribosomal subunit protein uL14m (145 aa).

The transit peptide at Met1–Ser30 directs the protein to the mitochondrion.

This sequence belongs to the universal ribosomal protein uL14 family. In terms of assembly, component of the mitochondrial large ribosomal subunit (mt-LSU). Mature mammalian 55S mitochondrial ribosomes consist of a small (28S) and a large (39S) subunit. The 28S small subunit contains a 12S ribosomal RNA (12S mt-rRNA) and 30 different proteins. The 39S large subunit contains a 16S rRNA (16S mt-rRNA), a copy of mitochondrial valine transfer RNA (mt-tRNA(Val)), which plays an integral structural role, and 52 different proteins. Interacts with MALSU1.

It is found in the mitochondrion. In terms of biological role, forms part of 2 intersubunit bridges in the assembled ribosome. Upon binding to MALSU1 intersubunit bridge formation is blocked, preventing ribosome formation and repressing translation. This is Large ribosomal subunit protein uL14m (MRPL14) from Homo sapiens (Human).